A 175-amino-acid chain; its full sequence is Translation initiation factor IF-3 (175 aa).

It belongs to the IF-3 family. As to quaternary structure, monomer.

It localises to the cytoplasm. Its function is as follows. IF-3 binds to the 30S ribosomal subunit and shifts the equilibrium between 70S ribosomes and their 50S and 30S subunits in favor of the free subunits, thus enhancing the availability of 30S subunits on which protein synthesis initiation begins. This is Translation initiation factor IF-3 from Blochmanniella floridana.